A 729-amino-acid polypeptide reads, in one-letter code: MNPFQKNESKETLFSPVSIEEVPPRPPSPPKKPSPTICGSNYPLSIAFIVVNEFCERFSYYGMKAVLILYFLYFLHWNEDTSTSIYHAFSSLCYFTPILGAAIADSWLGKFKTIIYLSLVYVLGHVIKSLGALPILGGQVVHTVLSLIGLSLIALGTGGIKPCVAAFGGDQFEEKHAEERTRYFSVFYLSINAGSLISTFITPMLRGDVQCFGEDCYALAFGVPGLLMVIALVVFAMGSKIYNKPPPEGNIVAQVFKCIWFAISNRFKNRSGDIPKRQHWLDWAAEKYPKQLIMDVKALTRVLFLYIPLPMFWALLDQQGSRWTLQAIRMNRNLGFFVLQPDQMQVLNPLLVLIFIPLFDFVIYRLVSKCGINFSSLRKMAVGMILACLAFAVAAAVEIKINEMAPAQPGPQEVFLQVLNLADDEVKVTVVGNENNSLLIESIKSFQKTPHYSKLHLKTKSQDFHFHLKYHNLSLYTEHSVQEKNWYSLVIREDGNSISSMMVKDTESRTTNGMTTVRFVNTLHKDVNISLSTDTSLNVGEDYGVSAYRTVQRGEYPAVHCRTEDKNFSLNLGLLDFGAAYLFVITNNTNQGLQAWKIEDIPANKMSIAWQLPQYALVTAGEVMFSVTGLEFSYSQAPSSMKSVLQAAWLLTIAVGNIIVLVVAQFSGLVQWAEFILFSCLLLVICLIFSIMGYYYVPVKTEDMRGPADKHIPHIQGNMIKLETKKTKL.

The tract at residues 1–34 (MNPFQKNESKETLFSPVSIEEVPPRPPSPPKKPS) is disordered. Topologically, residues 1–57 (MNPFQKNESKETLFSPVSIEEVPPRPPSPPKKPSPTICGSNYPLSIAFIVVNEFCER) are cytoplasmic. Serine 9 is modified (phosphoserine). Position 12 is a phosphothreonine (threonine 12). Residues 24–33 (PRPPSPPKKP) show a composition bias toward pro residues. Serine 28 bears the Phosphoserine mark. The chain crosses the membrane as a helical span at residues 58–78 (FSYYGMKAVLILYFLYFLHWN). The Extracellular portion of the chain corresponds to 79–83 (EDTST). A helical transmembrane segment spans residues 84 to 104 (SIYHAFSSLCYFTPILGAAIA). The Cytoplasmic segment spans residues 105–113 (DSWLGKFKT). A helical transmembrane segment spans residues 114–134 (IIYLSLVYVLGHVIKSLGALP). The Extracellular portion of the chain corresponds to 135-139 (ILGGQ). Residues 140-160 (VVHTVLSLIGLSLIALGTGGI) form a helical membrane-spanning segment. Over 161–183 (KPCVAAFGGDQFEEKHAEERTRY) the chain is Cytoplasmic. Residues 184 to 204 (FSVFYLSINAGSLISTFITPM) form a helical membrane-spanning segment. Over 205–217 (LRGDVQCFGEDCY) the chain is Extracellular. The helical transmembrane segment at 218–238 (ALAFGVPGLLMVIALVVFAMG) threads the bilayer. Residues 239 to 295 (SKIYNKPPPEGNIVAQVFKCIWFAISNRFKNRSGDIPKRQHWLDWAAEKYPKQLIMD) are Cytoplasmic-facing. The chain crosses the membrane as a helical span at residues 296-316 (VKALTRVLFLYIPLPMFWALL). The Extracellular segment spans residues 317–343 (DQQGSRWTLQAIRMNRNLGFFVLQPDQ). A helical transmembrane segment spans residues 344-364 (MQVLNPLLVLIFIPLFDFVIY). Residues 365–380 (RLVSKCGINFSSLRKM) lie on the Cytoplasmic side of the membrane. The helical transmembrane segment at 381–401 (AVGMILACLAFAVAAAVEIKI) threads the bilayer. Residues 402 to 611 (NEMAPAQPGP…PANKMSIAWQ (210 aa)) are Extracellular-facing. An extracellular domain (ECD) region spans residues 402-611 (NEMAPAQPGP…PANKMSIAWQ (210 aa)). Residues asparagine 435, asparagine 472, asparagine 528, asparagine 567, and asparagine 587 are each glycosylated (N-linked (GlcNAc...) asparagine). Residues 612-632 (LPQYALVTAGEVMFSVTGLEF) form a helical membrane-spanning segment. Over 633 to 643 (SYSQAPSSMKS) the chain is Cytoplasmic. A helical membrane pass occupies residues 644–664 (VLQAAWLLTIAVGNIIVLVVA). The Extracellular segment spans residues 665–674 (QFSGLVQWAE). Residues 675–695 (FILFSCLLLVICLIFSIMGYY) form a helical membrane-spanning segment. At 696 to 729 (YVPVKTEDMRGPADKHIPHIQGNMIKLETKKTKL) the chain is on the cytoplasmic side.

This sequence belongs to the major facilitator superfamily. Proton-dependent oligopeptide transporter (POT/PTR) (TC 2.A.17) family. Interacts (via extracellular domain region) with trypsin. As to expression, expressed in kidney. Not detected in intestine. Highly expressed in macrophages.

It localises to the apical cell membrane. It is found in the cytoplasmic vesicle. The protein localises to the phagosome membrane. Its subcellular location is the cell membrane. The enzyme catalyses a dipeptide(out) + 2 H(+)(out) = a dipeptide(in) + 2 H(+)(in). The catalysed reaction is N-acetyl-D-muramoyl-L-alanyl-D-isoglutamine(out) + 3 H(+)(out) = N-acetyl-D-muramoyl-L-alanyl-D-isoglutamine(in) + 3 H(+)(in). It carries out the reaction glycyl-L-leucine(out) + 2 H(+)(out) = glycyl-L-leucine(in) + 2 H(+)(in). It catalyses the reaction glycyl-L-lysine(out) + 2 H(+)(out) = glycyl-L-lysine(in) + 2 H(+)(in). The enzyme catalyses glycyl-L-glutamate(out) + 3 H(+)(out) = glycyl-L-glutamate(in) + 3 H(+)(in). The catalysed reaction is L-alanyl-L-alanine(out) + 2 H(+)(out) = L-alanyl-L-alanine(in) + 2 H(+)(in). It carries out the reaction an L-amino acid tripeptide(out) + 2 H(+)(out) = an L-amino acid tripeptide(in) + 2 H(+)(in). It catalyses the reaction carnosine(out) + 2 H(+)(out) = carnosine(in) + 2 H(+)(in). Functionally, proton-coupled amino-acid transporter that transports oligopeptides of 2 to 4 amino acids with a preference for dipeptides. Transports neutral and anionic dipeptides with a proton to peptide stoichiometry of 2:1 or 3:1. In kidney, involved in the absorption of circulating di- and tripeptides from the glomerular filtrate. Can also transport beta-lactam antibiotics, such as the aminocephalosporin cefadroxil, and other antiviral and anticancer drugs. Transports the dipeptide-like aminopeptidase inhibitor bestatin. Also able to transport carnosine. Involved in innate immunity by promoting the detection of microbial pathogens by NOD-like receptors (NLRs). Mediates transport of bacterial peptidoglycans across the plasma membrane or, in macrophages, the phagosome membrane: catalyzes the transport of certain bacterial peptidoglycans, such as muramyl dipeptide (MDP), the NOD2 ligand. The chain is Solute carrier family 15 member 2 from Homo sapiens (Human).